A 198-amino-acid chain; its full sequence is FMN-dependent NADH:quinone oxidoreductase 2 (198 aa).

136–139 (SRGG) provides a ligand contact to FMN.

This sequence belongs to the azoreductase type 1 family. As to quaternary structure, homodimer. It depends on FMN as a cofactor.

It catalyses the reaction 2 a quinone + NADH + H(+) = 2 a 1,4-benzosemiquinone + NAD(+). The enzyme catalyses N,N-dimethyl-1,4-phenylenediamine + anthranilate + 2 NAD(+) = 2-(4-dimethylaminophenyl)diazenylbenzoate + 2 NADH + 2 H(+). Its function is as follows. Quinone reductase that provides resistance to thiol-specific stress caused by electrophilic quinones. Also exhibits azoreductase activity. Catalyzes the reductive cleavage of the azo bond in aromatic azo compounds to the corresponding amines. This Clostridium perfringens (strain 13 / Type A) protein is FMN-dependent NADH:quinone oxidoreductase 2.